The sequence spans 719 residues: DNA polymerase epsilon subunit B (719 aa).

Residues 107-147 (SIPPKTKTYNNGGGKTTTIDRFLTKRPSPSDNDEGPLDQSI) form a disordered region.

Belongs to the DNA polymerase epsilon subunit B family. As to quaternary structure, heterotetramer. Consists of four subunits: POL2, DPB2, DPB3 and DPB4.

It is found in the nucleus. Its function is as follows. As accessory component of the DNA polymerase epsilon (DNA polymerase II) participates in chromosomal DNA replication. This is DNA polymerase epsilon subunit B (DPB2) from Candida glabrata (strain ATCC 2001 / BCRC 20586 / JCM 3761 / NBRC 0622 / NRRL Y-65 / CBS 138) (Yeast).